A 39-amino-acid chain; its full sequence is Photosystem II reaction center protein J (39 aa).

The helical transmembrane segment at 7–27 threads the bilayer; sequence IPLWLIATVGGTAALTVVGLF.

Belongs to the PsbJ family. As to quaternary structure, PSII is composed of 1 copy each of membrane proteins PsbA, PsbB, PsbC, PsbD, PsbE, PsbF, PsbH, PsbI, PsbJ, PsbK, PsbL, PsbM, PsbT, PsbX, PsbY, PsbZ, Psb30/Ycf12, at least 3 peripheral proteins of the oxygen-evolving complex and a large number of cofactors. It forms dimeric complexes.

Its subcellular location is the plastid. The protein resides in the chloroplast thylakoid membrane. Functionally, one of the components of the core complex of photosystem II (PSII). PSII is a light-driven water:plastoquinone oxidoreductase that uses light energy to abstract electrons from H(2)O, generating O(2) and a proton gradient subsequently used for ATP formation. It consists of a core antenna complex that captures photons, and an electron transfer chain that converts photonic excitation into a charge separation. The chain is Photosystem II reaction center protein J from Rhodomonas salina (Cryptomonas salina).